Consider the following 500-residue polypeptide: Putative beta-glucosidase 5 (500 aa).

The N-terminal stretch at 1-20 (MEQFFALFTIFLSFAFPGRC) is a signal peptide. Residues Gln-43, His-140, and 185 to 186 (NE) each bind a beta-D-glucoside. Glu-186 serves as the catalytic Proton donor. Cysteines 205 and 212 form a disulfide. A glycan (N-linked (GlcNAc...) asparagine) is linked at Asn-216. Tyr-328 is an a beta-D-glucoside binding site. N-linked (GlcNAc...) asparagine glycosylation occurs at Asn-361. Glu-394 contributes to the a beta-D-glucoside binding site. Glu-394 serves as the catalytic Nucleophile. A glycan (N-linked (GlcNAc...) asparagine) is linked at Asn-424. Trp-434 and Tyr-450 together coordinate a beta-D-glucoside. N-linked (GlcNAc...) asparagine glycosylation is found at Asn-456 and Asn-495.

The protein belongs to the glycosyl hydrolase 1 family.

It carries out the reaction Hydrolysis of terminal, non-reducing beta-D-glucosyl residues with release of beta-D-glucose.. In Arabidopsis thaliana (Mouse-ear cress), this protein is Putative beta-glucosidase 5.